The chain runs to 201 residues: Small ribosomal subunit protein uS4c (201 aa).

Positions 20–43 (GLTSKRPRAGSDLRNQSRSGKRSQ) are disordered. In terms of domain architecture, S4 RNA-binding spans 89–149 (MRLDNILFRL…DEQKSRALIQ (61 aa)).

It belongs to the universal ribosomal protein uS4 family. In terms of assembly, part of the 30S ribosomal subunit. Contacts protein S5. The interaction surface between S4 and S5 is involved in control of translational fidelity.

Its subcellular location is the plastid. It is found in the chloroplast. Its function is as follows. One of the primary rRNA binding proteins, it binds directly to 16S rRNA where it nucleates assembly of the body of the 30S subunit. Functionally, with S5 and S12 plays an important role in translational accuracy. The protein is Small ribosomal subunit protein uS4c (rps4) of Buxus microphylla (Littleleaf boxwood).